A 357-amino-acid chain; its full sequence is Spermatogenesis- and oogenesis-specific basic helix-loop-helix-containing protein 1 (357 aa).

Residues 1–14 (MASGGHERANEDYR) show a composition bias toward basic and acidic residues. The disordered stretch occupies residues 1–40 (MASGGHERANEDYRVSGITGCSKTPQPETQDSLQTSSQSS). Polar residues predominate over residues 19–31 (TGCSKTPQPETQD). Residues 54 to 105 (PSLRRNVVSERERRRRISLSCEHLRALLPQFDGRREDMASVLEMSVYFLQLA) enclose the bHLH domain. The disordered stretch occupies residues 145–210 (KPDSGIAKPS…EPESSSLGPG (66 aa)). Over residues 200 to 209 (SEPESSSLGP) the composition is skewed to low complexity.

Forms both hetero- and homodimers with SOHLH2. In terms of tissue distribution, in males, it is mainly expressed in testis, while in females it is mainly expressed in ovary. In testis, it is exclusively expressed in spermatogonia, with a preference for prespermatogonia and type A spermatogonia. In ovary, it is detected in germ cell cysts, primordial follicles, and primary follicles but is undetectable by the secondary follicle stage (at protein level). Expressed in the majority of spermatogonia in adult animals, but not in the most undifferentiated spermatogonial population.

It localises to the cytoplasm. The protein resides in the nucleus. Its function is as follows. Transcription regulator of both male and female germline differentiation. Suppresses genes involved in spermatogonial stem cells maintenance, and induces genes important for spermatogonial differentiation. Coordinates oocyte differentiation without affecting meiosis I. This chain is Spermatogenesis- and oogenesis-specific basic helix-loop-helix-containing protein 1 (Sohlh1), found in Mus musculus (Mouse).